The primary structure comprises 2327 residues: Voltage-dependent N-type calcium channel subunit alpha-1B (2327 aa).

The tract at residues 1-37 is disordered; the sequence is MVRFGDELGGRYGGTGGGERARGGGAGGAGGPGQGGL. The Cytoplasmic segment spans residues 1-90; that stretch reads MVRFGDELGG…DNVVRKYAKR (90 aa). Over residues 10–37 the composition is skewed to gly residues; that stretch reads GRYGGTGGGERARGGGAGGAGGPGQGGL. Arg22 bears the Omega-N-methylarginine mark. Residues 82–359 form an I repeat; that stretch reads NVVRKYAKRI…LVLGVLSGEF (278 aa). Residues 91 to 114 form a helical membrane-spanning segment; the sequence is ITEWPPFEYMILATIIANCIVLAL. Residues 115 to 131 lie on the Extracellular side of the membrane; it reads EQHLPDGDKTPMSERLD. Residues 132–152 traverse the membrane as a helical segment; sequence DTEPYFIGIFCFEAGIKIIAL. The Cytoplasmic portion of the chain corresponds to 153–163; the sequence is GFVFHKGSYLR. Residues 164 to 182 form a helical membrane-spanning segment; the sequence is NGWNVMDFVVVLTGILATA. At 183 to 187 the chain is on the extracellular side; the sequence is GTDFD. Residues 188-211 traverse the membrane as a helical segment; sequence LRTLRAVRVLRPLKLVSGIPSLQV. Topologically, residues 212-221 are cytoplasmic; sequence VLKSIMKAMV. Residues 222 to 244 traverse the membrane as a helical segment; it reads PLLQIGLLLFFAILMFAIIGLEF. Residues 245 to 331 are Extracellular-facing; sequence YMGKFHKACF…NTNDAAGNTW (87 aa). Asn256 carries an N-linked (GlcNAc...) asparagine glycan. The helical transmembrane segment at 332 to 356 threads the bilayer; it reads NWLYFIPLIIIGSFFMLNLVLGVLS. Residues 357–482 are Cytoplasmic-facing; that stretch reads GEFAKERERV…FFIRRMVKAQ (126 aa). Residues 379-396 form a binding to the beta subunit region; that stretch reads QQIERELNGYLEWIFKAE. Residue Ser411 is modified to Phosphoserine. Position 451 to 458 (451 to 458) interacts with ATP; it reads ASLKSGKT. One copy of the II repeat lies at 468 to 712; it reads EKMFRFFIRR…VFLAIAVDNL (245 aa). The helical transmembrane segment at 483–501 threads the bilayer; sequence SFYWVVLCVVALNTLCVAM. Over 502–511 the chain is Extracellular; that stretch reads VHYNQPQRLT. The helical transmembrane segment at 512–534 threads the bilayer; it reads TALYFAEFVFLGLFLTEMSLKMY. Topologically, residues 535 to 544 are cytoplasmic; that stretch reads GLGPRSYFRS. Ser544 provides a ligand contact to a 1,2-diacyl-sn-glycero-3-phospho-(1D-myo-inositol-4,5-bisphosphate). A helical transmembrane segment spans residues 545–566; the sequence is SFNCFDFGVIVGSIFEVVWAAI. Residues 567-573 are Extracellular-facing; sequence KPGTSFG. The helical transmembrane segment at 574 to 586 threads the bilayer; that stretch reads ISVLRALRLLRIF. A 1,2-diacyl-sn-glycero-3-phospho-(1D-myo-inositol-4,5-bisphosphate) contacts are provided by Arg584 and Lys587. Over 587 to 604 the chain is Cytoplasmic; sequence KVTKYWNSLRNLVVSLLN. A helical membrane pass occupies residues 605 to 630; the sequence is SMKSIISLLFLLFLFIVVFALLGMQL. At 631–682 the chain is on the extracellular side; sequence FGGQFNFQDETPTTNFDTFPAAILTVFQILTGEDWNAVMYHGIESQGGVSKG. Residues 683–709 form a helical membrane-spanning segment; that stretch reads MFSSFYFIVLTLFGNYTLLNVFLAIAV. Over 710 to 1140 the chain is Cytoplasmic; it reads DNLANAQELT…FCHYIVTMRY (431 aa). Phosphoserine is present on residues Ser745, Ser748, and Ser783. Disordered stretches follow at residues 802-1015 and 1042-1066; these read TRHV…KEPH and EQPE…PSTT. Composition is skewed to basic and acidic residues over residues 805-826, 869-885, 914-924, 961-972, and 988-1015; these read VRPD…RDGL, EQDR…EERA, GSPEEATEREP, GPREAENNEEPT, and PERE…KEPH. Residues 1050 to 1066 are compositionally biased toward polar residues; the sequence is QRNVTRMGSQPSDPSTT. A Phosphoserine modification is found at Ser1058. The III repeat unit spans residues 1126–1412; that stretch reads NLLRRFCHYI…IFVALIIITF (287 aa). Residues 1141–1159 traverse the membrane as a helical segment; sequence FEMVILVVIALSSIALAAE. Residues 1160 to 1167 lie on the Extracellular side of the membrane; the sequence is DPVRTDSF. Residues 1168–1192 traverse the membrane as a helical segment; sequence RNNALKYMDYIFTGVFTFEMVIKMI. The Cytoplasmic portion of the chain corresponds to 1193-1206; sequence DLGLLLHPGAYFRD. Residues 1207-1231 form a helical membrane-spanning segment; sequence LWNILDFIVVSGALVAFAFSSFMGG. The Extracellular portion of the chain corresponds to 1232–1237; it reads SKGKDI. The helical transmembrane segment at 1238–1258 threads the bilayer; that stretch reads NTIKSLRVLRVLRPLKTIKRL. The Cytoplasmic segment spans residues 1259 to 1276; that stretch reads PKLKAVFDCVVNSLKNVL. Residues 1277–1296 traverse the membrane as a helical segment; the sequence is NILIVYMLFMFIFAVIAVQL. At 1297–1383 the chain is on the extracellular side; sequence FKGKFFYCTD…EQGPSPGFRM (87 aa). A helical transmembrane segment spans residues 1384–1409; the sequence is ELSIFYVVYFVVFPFFFVNIFVALII. At 1410–1464 the chain is on the cytoplasmic side; the sequence is ITFQEQGDKVMSECSLEKNERACIDFAISAKPLTRYMPQNKQSFQYKTWTFVVSP. Residues 1449–1702 form an IV repeat; that stretch reads NKQSFQYKTW…LFVAVIMDNF (254 aa). A helical transmembrane segment spans residues 1465 to 1483; that stretch reads PFEYFIMAMIALNTVVLMM. The Extracellular segment spans residues 1484–1491; the sequence is KFYDAPYE. A helical membrane pass occupies residues 1492–1516; sequence YELMLKCLNIVFTSMFSMECILKII. The Cytoplasmic portion of the chain corresponds to 1517 to 1526; sequence AFGVLNYFRD. The chain crosses the membrane as a helical span at residues 1527–1548; that stretch reads AWNVFDFVTVLGSITDILVTEI. Residues 1549–1554 are Extracellular-facing; it reads ANNFIN. Residue Asn1554 is glycosylated (N-linked (GlcNAc...) asparagine). Residues 1555-1573 traverse the membrane as a helical segment; the sequence is LSFLRLFRAARLIKLLRQG. At 1574–1592 the chain is on the cytoplasmic side; the sequence is YTIRILLWTFVQSFKALPY. The helical transmembrane segment at 1593–1612 threads the bilayer; it reads VCLLIAMLFFIYAIIGMQVF. Residues 1613 to 1674 lie on the Extracellular side of the membrane; sequence GNIALDDDTS…ANASECGSDF (62 aa). Asn1666 is a glycosylation site (N-linked (GlcNAc...) asparagine). Residues 1675-1698 form a helical membrane-spanning segment; it reads AYFYFVSFIFLCSFLMLNLFVAVI. Residues 1699 to 2327 lie on the Cytoplasmic side of the membrane; that stretch reads MDNFEYLTRD…YHHPDQDHWC (629 aa). Positions 1715–1750 constitute an EF-hand domain; it reads HHLDEFIRVWAEYDPAACGRISYNDMFEMLKHMSPP. The Ca(2+) site is built by Asp1728, Arg1734, and Asp1739. The disordered stretch occupies residues 1972-2193; that stretch reads TLRGPDGEPQ…TPRPSITYKT (222 aa). Residues 2039–2053 show a composition bias toward basic residues; that stretch reads SHHHHHRCHRRRDKK. Ser2056 is modified (phosphoserine). Basic and acidic residues predominate over residues 2088–2104; that stretch reads CRRDRKQERGRSQERRQ. 2 stretches are compositionally biased toward polar residues: residues 2131–2141 and 2152–2168; these read PSLSSHPTSPT and GSGS…SGAS. Phosphoserine occurs at positions 2212, 2221, and 2244. Disordered stretches follow at residues 2230–2249 and 2273–2292; these read EPLS…PYLG and ATNS…TSQS. Over residues 2276–2292 the composition is skewed to low complexity; sequence SGRSSRTSYVSSLTSQS.

This sequence belongs to the calcium channel alpha-1 subunit (TC 1.A.1.11) family. CACNA1B subfamily. Multisubunit complex consisting of alpha-1, alpha-2, beta and delta subunits in a 1:1:1:1 ratio. The channel activity is directed by the pore-forming and voltage-sensitive alpha-1 subunit. In many cases, this subunit is sufficient to generate voltage-sensitive calcium channel activity. The auxiliary subunits beta and alpha-2/delta linked by a disulfide bridge regulate the channel activity. Interacts with RIMS1. Interacts with FMR1 (via C-terminus); this interaction induces a decrease in the number of presynaptic functional CACNA1B channels at the cell surface. Post-translationally, phosphorylated in vitro by CaM-kinase II, PKA, PKC and CGPK. As to expression, widespread expression throughout the brain. Highest levels in pyramidal cell layers C1, C2 and C3 of the hippocampus, in the dentate gyrus, in the cortex layers 2 et 4, in the subiculum and the habenula.

The protein localises to the membrane. It catalyses the reaction Ca(2+)(in) = Ca(2+)(out). Is specifically blocked by omega-conotoxin GVIA. Is specifically blocked by omega-conotoxin MVIIA (ziconotide). Is insensitive to dihydropyridines (DHP). Functionally, voltage-sensitive calcium channels (VSCC) mediate the entry of calcium ions into excitable cells and are also involved in a variety of calcium-dependent processes, including muscle contraction, hormone or neurotransmitter release, gene expression, cell motility, cell division and cell death. This alpha-1B subunit gives rise to N-type calcium currents. N-type calcium channels belong to the 'high-voltage activated' (HVA) group. They are involved in pain signaling. Calcium channels containing alpha-1B subunit may play a role in directed migration of immature neurons. Mediates Ca(2+) release probability at hippocampal neuronal soma and synaptic terminals. In Mus musculus (Mouse), this protein is Voltage-dependent N-type calcium channel subunit alpha-1B (Cacna1b).